Reading from the N-terminus, the 589-residue chain is Protein kinase G11A (589 aa).

Residues 1–167 (MASKAMPRAP…SACSSISSVT (167 aa)) form a disordered region. Composition is skewed to polar residues over residues 15-36 (NLQSLKLCSQNDSSLETTSPSK), 46-55 (AESSKPNSEV), and 63-76 (TQHQNESIDLTGSN). Positions 91–100 (RLADEEKGVV) are enriched in basic and acidic residues. Low complexity predominate over residues 142–165 (SSSRCRPSTSSDVSDESACSSISS). One can recognise a Protein kinase domain in the interval 195-533 (FKLLKKLGCG…ATEIKQHPFF (339 aa)). ATP-binding positions include 201–209 (LGCGDIGSV) and lysine 224. Residue aspartate 320 is the Proton acceptor of the active site. The disordered stretch occupies residues 551–589 (RPVEIERPPKQPVSTSEPAAAPSDAAQKSSDSYLEFDFF).

Belongs to the protein kinase superfamily. Ser/Thr protein kinase family.

It carries out the reaction L-seryl-[protein] + ATP = O-phospho-L-seryl-[protein] + ADP + H(+). The enzyme catalyses L-threonyl-[protein] + ATP = O-phospho-L-threonyl-[protein] + ADP + H(+). Functionally, may play a role in the regulation of metabolism and signal transduction processes. The polypeptide is Protein kinase G11A (Oryza sativa subsp. indica (Rice)).